The chain runs to 440 residues: GTPase Obg (440 aa).

The 159-residue stretch at 5–163 (STFVDQTKIE…RTLRLELKVL (159 aa)) folds into the Obg domain. Residues 164–338 (ADVGLVGFPS…LMSRAADLVS (175 aa)) form the OBG-type G domain. GTP contacts are provided by residues 170 to 177 (GFPSVGKS), 195 to 199 (FTTLK), 217 to 220 (DLPG), 288 to 291 (SQMD), and 319 to 321 (SSV). Mg(2+) is bound by residues Ser177 and Thr197. An OCT domain is found at 362 to 440 (YHRPEKMEFT…IGDFSFEFVQ (79 aa)).

The protein belongs to the TRAFAC class OBG-HflX-like GTPase superfamily. OBG GTPase family. In terms of assembly, monomer. It depends on Mg(2+) as a cofactor.

It localises to the cytoplasm. Functionally, an essential GTPase which binds GTP, GDP and possibly (p)ppGpp with moderate affinity, with high nucleotide exchange rates and a fairly low GTP hydrolysis rate. Plays a role in control of the cell cycle, stress response, ribosome biogenesis and in those bacteria that undergo differentiation, in morphogenesis control. The chain is GTPase Obg from Lactobacillus delbrueckii subsp. bulgaricus (strain ATCC 11842 / DSM 20081 / BCRC 10696 / JCM 1002 / NBRC 13953 / NCIMB 11778 / NCTC 12712 / WDCM 00102 / Lb 14).